Here is a 114-residue protein sequence, read N- to C-terminus: UPF0102 protein HPAG1_0809 (114 aa).

Belongs to the UPF0102 family.

The chain is UPF0102 protein HPAG1_0809 from Helicobacter pylori (strain HPAG1).